The chain runs to 315 residues: Cytochrome c biogenesis protein CcsA (315 aa).

A run of 7 helical transmembrane segments spans residues valine 14 to tryptophan 34, isoleucine 72 to phenylalanine 92, isoleucine 101 to leucine 121, valine 146 to leucine 166, serine 221 to asparagine 241, threonine 255 to leucine 272, and alanine 282 to leucine 302.

The protein belongs to the CcmF/CycK/Ccl1/NrfE/CcsA family. In terms of assembly, may interact with ccs1.

Its subcellular location is the cellular thylakoid membrane. Functionally, required during biogenesis of c-type cytochromes (cytochrome c6 and cytochrome f) at the step of heme attachment. This Prochlorococcus marinus (strain NATL1A) protein is Cytochrome c biogenesis protein CcsA.